Reading from the N-terminus, the 80-residue chain is Small pacifastin protease inhibitor (80 aa).

The first 24 residues, 1–24, serve as a signal peptide directing secretion; that stretch reads MSKVLKVGLLLLLVAVAASAYAVA. Positions 25–47 are excised as a propeptide; the sequence is EENGAPKENKQLPQIDDYGVTNK. The 36-residue stretch at 45–80 folds into the Pacifastin domain; it reads TNKCPANQPFKWNCNYCTCGPEGKDASCTRMACPQH. Disulfide bonds link cysteine 48–cysteine 63, cysteine 58–cysteine 77, and cysteine 61–cysteine 72.

It belongs to the protease inhibitor I19 family. Expressed in the venom apparatus. Low transcript levels are also detected in other tissues.

The protein resides in the secreted. Functionally, parasitic wasp protein that may interfere with the host immune response. The recombinant protein inhibits trypsin activity and prophenoloxidase (PPO) activation, an enzyme essential for both clotting and insect innate immune responses. It does not inhibit activity of chymotrypsin and protease K, and has no effect on phenoloxidase (PO) activity. In Nasonia vitripennis (Parasitic wasp), this protein is Small pacifastin protease inhibitor.